Reading from the N-terminus, the 350-residue chain is MIALRENIAEMAGYVPGFQPLDVDSYIKLNTNENPYPPSPKVLEAIAKEAGEGLRRYPDAASRLAREEAAKVYGFDPSWIIMANGSDEVLNNLIRACAGEGEEIAFINPSYSYYGTLAEVQGARVRTFGLSESFEPEGIPEHYDGKLFFLTNPNAPLGFTYSQRYIADLAGRLSGVLVVDEAYVDFAEETSLELVRSFDNVVVTRTFSKSYSLAGMRLGLAIARPEIIAALNKIRDHYNLDRLAQAAAAAALADQPYFQECVRKIKETRAWFTAELQQLGYQVIPSSGNFVFASPPDRDGTRIYQGLYDRKILVRHFTDPKLAHGLRISIGSREEMEQTVKALRELGPGR.

Lys209 carries the post-translational modification N6-(pyridoxal phosphate)lysine.

This sequence belongs to the class-II pyridoxal-phosphate-dependent aminotransferase family. Histidinol-phosphate aminotransferase subfamily. Homodimer. Pyridoxal 5'-phosphate serves as cofactor.

The enzyme catalyses L-histidinol phosphate + 2-oxoglutarate = 3-(imidazol-4-yl)-2-oxopropyl phosphate + L-glutamate. The protein operates within amino-acid biosynthesis; L-histidine biosynthesis; L-histidine from 5-phospho-alpha-D-ribose 1-diphosphate: step 7/9. The polypeptide is Histidinol-phosphate aminotransferase (Citrifermentans bemidjiense (strain ATCC BAA-1014 / DSM 16622 / JCM 12645 / Bem) (Geobacter bemidjiensis)).